Here is a 329-residue protein sequence, read N- to C-terminus: MTDTTAPRTSGAVAAGLATIAADGTVLDTWFPAPELSDEPGPSGTERLTAEQAAELLGGGATAAVGPDARRGVEVVAVRTVISSLDEKPVDTHDVYLRLHLLSHRLVKPHGQSLDGIFAHLANVAWTSLGPVAVDDIEKVRLNARAEGLHLQVTSIDKFPRMTDYVAPKGVRIADADRVRLGAHLSAGTTVMHEGFVNFNAGTLGTSMVEGRISAGVVVGDGSDIGGGASTMGTLSGGGNVRIVIGERCLVGAEAGVGIALGDECVVEAGLYVTAGTRVTMPDGQVVKARELSGASNILFRRNSVTGTVEARPNNAVWGGLNEILHSHN.

Mg(2+) is bound by residues aspartate 177 and glutamate 194. Residue glutamate 210 is the Acyl-anhydride intermediate of the active site. Succinyl-CoA is bound by residues arginine 212, glycine 227, serine 230, alanine 253, 268–269, glycine 276, lysine 288, and 301–304; these read EA and RRNS.

The protein belongs to the type 2 tetrahydrodipicolinate N-succinyltransferase family. As to quaternary structure, homotrimer.

The protein resides in the cytoplasm. It catalyses the reaction (S)-2,3,4,5-tetrahydrodipicolinate + succinyl-CoA + H2O = (S)-2-succinylamino-6-oxoheptanedioate + CoA. It participates in amino-acid biosynthesis; L-lysine biosynthesis via DAP pathway; LL-2,6-diaminopimelate from (S)-tetrahydrodipicolinate (succinylase route): step 1/3. Catalyzes the conversion of the cyclic tetrahydrodipicolinate (THDP) into the acyclic N-succinyl-L-2-amino-6-oxopimelate using succinyl-CoA. The sequence is that of 2,3,4,5-tetrahydropyridine-2,6-dicarboxylate N-succinyltransferase from Streptomyces coelicolor (strain ATCC BAA-471 / A3(2) / M145).